We begin with the raw amino-acid sequence, 447 residues long: tRNA-2-methylthio-N(6)-dimethylallyladenosine synthase (447 aa).

In terms of domain architecture, MTTase N-terminal spans 3 to 120 (KKLYIETHGC…LPEMIDAART (118 aa)). [4Fe-4S] cluster-binding residues include C12, C49, C83, C157, C161, and C164. A Radical SAM core domain is found at 143 to 375 (RVDGPSAFVS…QHRINQYGFE (233 aa)). The TRAM domain occupies 378 to 442 (RRMVGTVQRI…PHSLRGTLLD (65 aa)).

It belongs to the methylthiotransferase family. MiaB subfamily. Monomer. Requires [4Fe-4S] cluster as cofactor.

Its subcellular location is the cytoplasm. It carries out the reaction N(6)-dimethylallyladenosine(37) in tRNA + (sulfur carrier)-SH + AH2 + 2 S-adenosyl-L-methionine = 2-methylsulfanyl-N(6)-dimethylallyladenosine(37) in tRNA + (sulfur carrier)-H + 5'-deoxyadenosine + L-methionine + A + S-adenosyl-L-homocysteine + 2 H(+). Its function is as follows. Catalyzes the methylthiolation of N6-(dimethylallyl)adenosine (i(6)A), leading to the formation of 2-methylthio-N6-(dimethylallyl)adenosine (ms(2)i(6)A) at position 37 in tRNAs that read codons beginning with uridine. This chain is tRNA-2-methylthio-N(6)-dimethylallyladenosine synthase, found in Ectopseudomonas mendocina (strain ymp) (Pseudomonas mendocina).